Here is a 342-residue protein sequence, read N- to C-terminus: Polygalacturonase inhibitor 3 (342 aa).

Positions 1-29 are cleaved as a signal peptide; sequence MTQFNIPVTMSSSLSIILVILVSLRTALS. Cystine bridges form between Cys-32–Cys-62 and Cys-63–Cys-72. N-linked (GlcNAc...) asparagine glycosylation occurs at Asn-64. LRR repeat units follow at residues 82–107, 108–132, 133–156, 157–180, 181–205, 206–228, 229–252, 253–275, 276–299, and 300–319; these read NNLD…LPYL, NFLY…LTQL, HYLY…IKTL, VTLD…LPNL, VGIT…SKLF, TSMT…NLNL, AFVD…DKNT, QKIH…SKNL, NGLD…LKFL, and HSLN…GGNL. Asn-141 carries an N-linked (GlcNAc...) asparagine glycan. Residue Asn-303 is glycosylated (N-linked (GlcNAc...) asparagine). Disulfide bonds link Cys-310–Cys-332 and Cys-334–Cys-341.

This sequence belongs to the polygalacturonase-inhibiting protein family. In terms of tissue distribution, found in suspension-cultured cells and to a lesser extent in hypocotyls, leaves and flowers.

The protein localises to the secreted. It is found in the cell wall. It localises to the membrane. In terms of biological role, inhibitor of fungal polygalacturonase. It is an important factor for plant resistance to phytopathogenic fungi. The sequence is that of Polygalacturonase inhibitor 3 (PGIP3) from Phaseolus vulgaris (Kidney bean).